The primary structure comprises 344 residues: MTVVDIVKRTTSSPDDTALVKTLADAGYSTADVVALVAKTEGNGCVNDFSRTLADHTWDAVLPADAVTVFSGGTEGVLSPHASAFVGTDRPAAPEGALVAAVGRTASIPIADLGRAGQVRAVAARVRELCADAALEPGDVHLVLVKCPLLTTESISRCLADGVEPATRDTLRSMAMSRAASALGVAVALGEISEPDAAAALRGEADVWSSVASISSGAELDDCHILVLGNSPAAHGPLRAVHGVMRDAMDARTVLDLLDRVSADGGEVVQVLAKAEADPSGSIRGRRHTMLTDSDLSSTRHARAAVGGLLAGLVGDSAIYVSGGAEHQGPPGGGPVTVVYRVAS.

The tract at residues 1–91 is RU A; the sequence is MTVVDIVKRT…ASAFVGTDRP (91 aa). Substrate is bound by residues R51 and 71–72; that span reads SG. Positions 97 to 232 are RU B; that stretch reads ALVAAVGRTA…CHILVLGNSP (136 aa). K146 is a catalytic residue. Substrate contacts are provided by residues R178 and 215–216; that span reads SS. The active-site Nucleophile is S215. Positions 238–344 are RU C; it reads LRAVHGVMRD…PVTVVYRVAS (107 aa). Residue E276 coordinates Mg(2+). Substrate is bound by residues R303 and 322-323; that span reads SG. Positions 325, 328, 329, 330, and 333 each coordinate Mg(2+).

Belongs to the cyclic amide hydrolase (CyAH) family. As to quaternary structure, homotetramer.

It carries out the reaction cyanurate + H2O = 1-carboxybiuret + H(+). The protein operates within xenobiotic degradation; atrazine degradation; biuret from cyanurate: step 1/1. Inhibited by barbituric acid. Responsible for the hydrolysis of cyanuric acid, an intermediate formed during catabolism of s-triazine based compounds in herbicides such as atrazine and polymers such as melamine. Catalyzes the hydrolytic opening of the s-triazine ring of cyanuric acid (2,4,6-trihydroxy-s-triazine) to yield carbon dioxide and carboxybiuret, which spontaneously decarboxylates to biuret. The chain is Cyanuric acid amidohydrolase from Pseudonocardia dioxanivorans (strain ATCC 55486 / DSM 44775 / JCM 13855 / CB1190).